The chain runs to 393 residues: Seven-bladed beta-propeller protein Rv1057 (393 aa).

The interval 208 to 230 (DGGRIGSRSRSRQKSSKPRGNQA) is disordered. Residues 214–224 (SRSRSRQKSSK) show a composition bias toward basic residues.

Its function is as follows. May play an important role in host-pathogen interactions and in ESAT-6 secretion. The sequence is that of Seven-bladed beta-propeller protein Rv1057 from Mycobacterium tuberculosis (strain ATCC 25618 / H37Rv).